Here is a 306-residue protein sequence, read N- to C-terminus: Replication termination factor 2 (306 aa).

The tract at residues Arg-192–Phe-306 is disordered. Basic and acidic residues predominate over residues Gly-226–Ser-240. Ser-287 is subject to Phosphoserine.

The protein belongs to the rtf2 family. Interacts with DDI2; probably also interacts with DDI1. Post-translationally, undergoes proteasomal degradation, via DDI1 and DDI2. Removal from stalled replisomes and degradation are required for genome stability.

The protein resides in the chromosome. Functionally, replication termination factor which is a component of the elongating replisome. Required for ATR pathway signaling upon DNA damage and has a positive activity during DNA replication. Might function to facilitate fork pausing at replication fork barriers like the rDNA. May be globally required to stimulate ATR signaling after the fork stalls or encounters a lesion. Interacts with nascent DNA. This is Replication termination factor 2 from Rattus norvegicus (Rat).